A 129-amino-acid polypeptide reads, in one-letter code: Histone H2A.J (129 aa).

The interval 1–22 is disordered; that stretch reads MSGRGKQGGKVRAKAKSRSSRA. An N6-acetyllysine mark is found at Lys-6 and Lys-10. Over residues 7–19 the composition is skewed to basic residues; sequence QGGKVRAKAKSRS. Lys-10 bears the N6-lactoyllysine; alternate mark. Gln-105 carries the N5-methylglutamine modification. Position 121 is a phosphothreonine; by DCAF1 (Thr-121).

It belongs to the histone H2A family. The nucleosome is a histone octamer containing two molecules each of H2A, H2B, H3 and H4 assembled in one H3-H4 heterotetramer and two H2A-H2B heterodimers. The octamer wraps approximately 147 bp of DNA. In terms of processing, monoubiquitination of Lys-120 (H2AXK119ub) gives a specific tag for epigenetic transcriptional repression. Following DNA double-strand breaks (DSBs), it is ubiquitinated through 'Lys-63' linkage of ubiquitin moieties. Post-translationally, glutamine methylation at Gln-105 (H2AQ104me) by FBL is specifically dedicated to polymerase I. It is present at 35S ribosomal DNA locus and impairs binding of the FACT complex. Phosphorylation on Ser-2 (H2AS1ph) is enhanced during mitosis. Phosphorylation on Ser-2 by RPS6KA5/MSK1 directly represses transcription. Acetylation of H3 inhibits Ser-2 phosphorylation by RPS6KA5/MSK1. Phosphorylation at Thr-121 (H2AT120ph) by DCAF1 is present in the regulatory region of many tumor suppresor genes and down-regulates their transcription.

The protein resides in the nucleus. It is found in the chromosome. Its function is as follows. Core component of nucleosome. Nucleosomes wrap and compact DNA into chromatin, limiting DNA accessibility to the cellular machineries which require DNA as a template. Histones thereby play a central role in transcription regulation, DNA repair, DNA replication and chromosomal stability. DNA accessibility is regulated via a complex set of post-translational modifications of histones, also called histone code, and nucleosome remodeling. In Mus musculus (Mouse), this protein is Histone H2A.J.